Here is a 323-residue protein sequence, read N- to C-terminus: Cytochrome c biogenesis protein CcsA (323 aa).

8 consecutive transmembrane segments (helical) span residues 9 to 29 (ILTHISFSIISIVITIHLLNL), 45 to 62 (MMATFFCITGLLVTRWIY), 71 to 91 (LYESLMFLSWSFSIIHMVPYF), 98 to 118 (LSAITAPSAIFTQGFATSGLL), 143 to 163 (MLLGYASLLCGSLLSVALLVI), 227 to 247 (IISLGFTFSTIGILSGAVWAN), 261 to 275 (TWAFITWTIFAIYLH), and 285 to 305 (VGPAIVASMGFLIIWICYFGV).

The protein belongs to the CcmF/CycK/Ccl1/NrfE/CcsA family. May interact with Ccs1.

Its subcellular location is the plastid. It is found in the chloroplast thylakoid membrane. Required during biogenesis of c-type cytochromes (cytochrome c6 and cytochrome f) at the step of heme attachment. This is Cytochrome c biogenesis protein CcsA from Calycanthus floridus var. glaucus (Eastern sweetshrub).